The chain runs to 204 residues: Urease accessory protein UreG (204 aa).

GTP is bound at residue 15–22 (GPVGSGKT).

Belongs to the SIMIBI class G3E GTPase family. UreG subfamily. In terms of assembly, homodimer. UreD, UreF and UreG form a complex that acts as a GTP-hydrolysis-dependent molecular chaperone, activating the urease apoprotein by helping to assemble the nickel containing metallocenter of UreC. The UreE protein probably delivers the nickel.

It is found in the cytoplasm. Facilitates the functional incorporation of the urease nickel metallocenter. This process requires GTP hydrolysis, probably effectuated by UreG. This is Urease accessory protein UreG from Methylobacterium sp. (strain 4-46).